The primary structure comprises 306 residues: uncharacterized protein (306 aa).

Tyr-51 serves as the catalytic Proton donor. Residue 197–207 participates in NADP(+) binding; that stretch reads GPVAKGLLTEK.

Belongs to the aldo/keto reductase family. Aldo/keto reductase 2 subfamily.

This is an uncharacterized protein from Bacillus subtilis (strain 168).